The primary structure comprises 431 residues: Large envelope protein (431 aa).

The N-myristoyl glycine; by host moiety is linked to residue G2. Residues 2-148 (GNNIKVTFNP…PPLRDTHPHL (147 aa)) are pre-S1. Residues 2–207 (GNNIKVTFNP…PSTTGDPALS (206 aa)) are pre-S. Residues 2–214 (GNNIKVTFNP…ALSPEMSPSS (213 aa)) are Virion surface; in external conformation-facing. Topologically, residues 2 to 286 (GNNIKVTFNP…NGFRWMYLRR (285 aa)) are intravirion; in internal conformation. The N-linked (GlcNAc...) asparagine glycan is linked to N3. Positions 115–147 (IPRGLVPPQTPTNRDQGRKPTPPTPPLRDTHPH) are disordered. The segment at 149 to 207 (TMKNQTFHLQGFVDGLRDLTTTERQHNAYGDPFTTLSPAVPTVSTILSPPSTTGDPALS) is pre-S2. Residues 215–235 (LLGLLAGLQVVYFLWTKILTI) form a helical membrane-spanning segment. At 236 to 286 (AQNLDWWWTSLSFPGGIPECTGQNSQFQTCKHLPTSCPPTCNGFRWMYLRR) the chain is on the intravirion; in external conformation side. A helical transmembrane segment spans residues 287–307 (FIIYLLVLLLCLIFLLVLLDW). Residues 308 to 379 (KGLIPVCPLQ…WALARFSWLN (72 aa)) are Virion surface-facing. A glycan (N-linked (GlcNAc...) asparagine; by host) is linked at N351. Residues 380–400 (LLVPLLQWLGGISLIAWFLLI) form a helical membrane-spanning segment. At 401–406 (WMIWFW) the chain is on the intravirion side. Residues 407–429 (GPALLSILPPFIPIFVLFFLIWV) form a helical membrane-spanning segment. At 430 to 431 (YI) the chain is on the virion surface side.

The protein belongs to the orthohepadnavirus major surface antigen family. As to quaternary structure, in its internal form (Li-HBsAg), interacts with the capsid protein and with the isoform S. Interacts with host chaperone CANX. In terms of assembly, associates with host chaperone CANX through its pre-S2 N glycan; this association may be essential for isoform M proper secretion. Interacts with isoform L. Interacts with the antigens of satellite virus HDV (HDVAgs); this interaction is required for encapsidation of HDV genomic RNA. Post-translationally, isoform M is N-terminally acetylated by host at a ratio of 90%, and N-glycosylated by host at the pre-S2 region. Myristoylated.

The protein localises to the virion membrane. Its function is as follows. The large envelope protein exists in two topological conformations, one which is termed 'external' or Le-HBsAg and the other 'internal' or Li-HBsAg. In its external conformation the protein attaches the virus to cell receptors and thereby initiating infection. This interaction determines the species specificity and liver tropism. This attachment induces virion internalization predominantly through caveolin-mediated endocytosis. The large envelope protein also assures fusion between virion membrane and endosomal membrane. In its internal conformation the protein plays a role in virion morphogenesis and mediates the contact with the nucleocapsid like a matrix protein. The middle envelope protein plays an important role in the budding of the virion. It is involved in the induction of budding in a nucleocapsid independent way. In this process the majority of envelope proteins bud to form subviral lipoprotein particles of 22 nm of diameter that do not contain a nucleocapsid. In Woodchuck hepatitis B virus (isolate 7) (WHV), this protein is Large envelope protein.